We begin with the raw amino-acid sequence, 104 residues long: Naphthalene 1,2-dioxygenase system, ferredoxin component (104 aa).

The 96-residue stretch at 6-101 (IEAVALSDIL…VKIENLRVMI (96 aa)) folds into the Rieske domain. [2Fe-2S] cluster-binding residues include cysteine 45, histidine 47, cysteine 64, and histidine 67.

The protein belongs to the bacterial ring-hydroxylating dioxygenase ferredoxin component family. As to quaternary structure, the naphthalene dioxygenase (NDO) multicomponent enzyme system is composed of an electron transfer component and a dioxygenase component (iron sulfur protein (ISP)). The electron transfer component is composed of a ferredoxin reductase (NdoR) and a ferredoxin (NdoA), and the dioxygenase component is formed of a heterohexamer (trimer of heterodimers) of three large alpha subunits (NdoB) and three small beta subunits (NdoC). The cofactor is [2Fe-2S] cluster.

Its pathway is aromatic compound metabolism; naphthalene degradation. Functionally, component of the naphthalene dioxygenase (NDO) multicomponent enzyme system which catalyzes the incorporation of both atoms of molecular oxygen into naphthalene to form cis-(1R,2S)-dihydroxy-1,2-dihydronaphthalene. Functions as an intermediate electron transfer protein via a specific interaction with iron sulfur protein components (ISP) (NdoB and NdoC). Also able to catalyze the cis-dihydroxylation of biphenyl and phenanthrene. This chain is Naphthalene 1,2-dioxygenase system, ferredoxin component, found in Pseudomonas putida (Arthrobacter siderocapsulatus).